A 96-amino-acid polypeptide reads, in one-letter code: Invertase 7 (96 aa).

The N-terminal stretch at 1–19 is a signal peptide; sequence MLLQAFIFLLAGFAAKISA. An N-linked (GlcNAc...) asparagine glycan is attached at Asn23. Substrate-binding positions include 39 to 42 and Gln60; that span reads WMND. Asp42 is a catalytic residue. 2 N-linked (GlcNAc...) asparagine glycosylation sites follow: Asn64 and Asn76.

It belongs to the glycosyl hydrolase 32 family.

It carries out the reaction Hydrolysis of terminal non-reducing beta-D-fructofuranoside residues in beta-D-fructofuranosides.. In Saccharomyces cerevisiae (Baker's yeast), this protein is Invertase 7 (SUC7).